The chain runs to 226 residues: Ribonuclease 3 (226 aa).

An RNase III domain is found at 6–128; that stretch reads INRLQRKLGY…LIGGIFLDSD (123 aa). Residue Glu-41 coordinates Mg(2+). Residue Asp-45 is part of the active site. Asp-114 and Glu-117 together coordinate Mg(2+). Glu-117 is a catalytic residue. In terms of domain architecture, DRBM spans 155 to 225; the sequence is DPKTRLQEFL…AEQALKKLEL (71 aa).

Belongs to the ribonuclease III family. In terms of assembly, homodimer. The cofactor is Mg(2+).

The protein localises to the cytoplasm. It carries out the reaction Endonucleolytic cleavage to 5'-phosphomonoester.. Digests double-stranded RNA. Involved in the processing of primary rRNA transcript to yield the immediate precursors to the large and small rRNAs (23S and 16S). Processes some mRNAs, and tRNAs when they are encoded in the rRNA operon. Processes pre-crRNA and tracrRNA of type II CRISPR loci if present in the organism. The protein is Ribonuclease 3 of Pectobacterium carotovorum subsp. carotovorum (strain PC1).